We begin with the raw amino-acid sequence, 96 residues long: Protein Vpr (96 aa).

A homooligomerization region spans residues M1 to L42. Phosphoserine; by host is present on residues S79, S94, and S96.

This sequence belongs to the HIV-1 VPR protein family. In terms of assembly, homooligomer, may form homodimer. Interacts with p6-gag region of the Pr55 Gag precursor protein through a (Leu-X-X)4 motif near the C-terminus of the P6gag protein. Interacts with host UNG. May interact with host RAD23A/HHR23A. Interacts with host VPRBP/DCAF1, leading to hijack the CUL4A-RBX1-DDB1-DCAF1/VPRBP complex, mediating ubiquitination of host proteins such as TERT and ZGPAT and arrest of the cell cycle in G2 phase. In terms of processing, phosphorylated on several residues by host. These phosphorylations regulate VPR activity for the nuclear import of the HIV-1 pre-integration complex.

The protein localises to the virion. It is found in the host nucleus. The protein resides in the host extracellular space. During virus replication, may deplete host UNG protein, and incude G2-M cell cycle arrest. Acts by targeting specific host proteins for degradation by the 26S proteasome, through association with the cellular CUL4A-DDB1 E3 ligase complex by direct interaction with host VPRPB/DCAF-1. Cell cycle arrest reportedly occurs within hours of infection and is not blocked by antiviral agents, suggesting that it is initiated by the VPR carried into the virion. Additionally, VPR induces apoptosis in a cell cycle dependent manner suggesting that these two effects are mechanistically linked. Detected in the serum and cerebrospinal fluid of AIDS patient, VPR may also induce cell death to bystander cells. Its function is as follows. During virus entry, plays a role in the transport of the viral pre-integration (PIC) complex to the host nucleus. This function is crucial for viral infection of non-dividing macrophages. May act directly at the nuclear pore complex, by binding nucleoporins phenylalanine-glycine (FG)-repeat regions. The sequence is that of Protein Vpr from Human immunodeficiency virus type 1 group M subtype B (isolate MN) (HIV-1).